Here is a 297-residue protein sequence, read N- to C-terminus: D-aminoacyl-tRNA deacylase (297 aa).

Belongs to the DtdA deacylase family. In terms of assembly, monomer. It depends on Zn(2+) as a cofactor.

The enzyme catalyses a D-aminoacyl-tRNA + H2O = a tRNA + a D-alpha-amino acid + H(+). It carries out the reaction glycyl-tRNA(Ala) + H2O = tRNA(Ala) + glycine + H(+). In terms of biological role, D-aminoacyl-tRNA deacylase with broad substrate specificity. By recycling D-aminoacyl-tRNA to D-amino acids and free tRNA molecules, this enzyme counteracts the toxicity associated with the formation of D-aminoacyl-tRNA entities in vivo. In Methanosarcina mazei (strain ATCC BAA-159 / DSM 3647 / Goe1 / Go1 / JCM 11833 / OCM 88) (Methanosarcina frisia), this protein is D-aminoacyl-tRNA deacylase.